The chain runs to 443 residues: Threonine/serine transporter TdcC (443 aa).

The next 11 membrane-spanning stretches (helical) occupy residues 22–42 (TTWT…FFPI), 44–64 (AGFG…PIAF), 97–117 (GVVI…IYGV), 140–160 (FVAL…KDLM), 163–183 (VMSF…LSLI), 207–227 (ILVT…FSPI), 259–279 (ASLL…FTLS), 319–339 (ASII…LGTL), 366–386 (ISMI…PNIL), 389–409 (IEAM…MFAI), and 423–443 (ENLF…YKLF).

This sequence belongs to the amino acid/polyamine transporter 2 family. SdaC/TdcC subfamily.

It localises to the cell inner membrane. The catalysed reaction is L-threonine(in) + H(+)(in) = L-threonine(out) + H(+)(out). It carries out the reaction L-serine(in) + H(+)(in) = L-serine(out) + H(+)(out). In terms of biological role, involved in the import of threonine and serine into the cell, with the concomitant import of a proton (symport system). This is Threonine/serine transporter TdcC from Enterobacter sp. (strain 638).